A 149-amino-acid polypeptide reads, in one-letter code: MDVSTQRRIAAAVLDCGIDRVWVDPENLEKVKMAITKDDIRLLINDGIIVKKQEKGISSARKKEVQEQKRKGKRKGPGSRRGAKGARTPKKEKWMNTIRPLRTLLKELRENEKIERSSYRKLYRMAKGGAFRSRNHMKLYMKEHGILAE.

The segment covering 55 to 69 has biased composition (basic and acidic residues); that stretch reads KGISSARKKEVQEQK. Residues 55–93 are disordered; it reads KGISSARKKEVQEQKRKGKRKGPGSRRGAKGARTPKKEK. Basic residues predominate over residues 70–88; it reads RKGKRKGPGSRRGAKGART.

This sequence belongs to the eukaryotic ribosomal protein eL19 family. Part of the 50S ribosomal subunit.

Binds to the 23S rRNA. This chain is Large ribosomal subunit protein eL19, found in Methanococcus vannielii.